The primary structure comprises 119 residues: Flagellar transcriptional regulator FlhD (119 aa).

This sequence belongs to the FlhD family. In terms of assembly, homodimer; disulfide-linked. Forms a heterohexamer composed of two FlhC and four FlhD subunits. Each FlhC binds a FlhD dimer, forming a heterotrimer, and a hexamer assembles by dimerization of two heterotrimers.

It localises to the cytoplasm. In terms of biological role, functions in complex with FlhC as a master transcriptional regulator that regulates transcription of several flagellar and non-flagellar operons by binding to their promoter region. Activates expression of class 2 flagellar genes, including fliA, which is a flagellum-specific sigma factor that turns on the class 3 genes. Also regulates genes whose products function in a variety of physiological pathways. The chain is Flagellar transcriptional regulator FlhD from Serratia marcescens.